Here is a 335-residue protein sequence, read N- to C-terminus: Beta-ketoacyl-[acyl-carrier-protein] synthase III (335 aa).

Residues cysteine 119 and histidine 261 contribute to the active site. Positions 262–266 (QANQR) are ACP-binding. The active site involves asparagine 291.

The protein belongs to the thiolase-like superfamily. FabH family. In terms of assembly, homodimer.

The protein localises to the cytoplasm. It catalyses the reaction malonyl-[ACP] + acetyl-CoA + H(+) = 3-oxobutanoyl-[ACP] + CO2 + CoA. The protein operates within lipid metabolism; fatty acid biosynthesis. Catalyzes the condensation reaction of fatty acid synthesis by the addition to an acyl acceptor of two carbons from malonyl-ACP. Catalyzes the first condensation reaction which initiates fatty acid synthesis and may therefore play a role in governing the total rate of fatty acid production. Possesses both acetoacetyl-ACP synthase and acetyl transacylase activities. Its substrate specificity determines the biosynthesis of branched-chain and/or straight-chain of fatty acids. This is Beta-ketoacyl-[acyl-carrier-protein] synthase III from Prochlorococcus marinus (strain MIT 9301).